We begin with the raw amino-acid sequence, 207 residues long: Probable molybdenum cofactor guanylyltransferase (207 aa).

Residues 9 to 11 (LAG), Lys-21, and Asp-97 contribute to the GTP site. Asp-97 is a binding site for Mg(2+).

This sequence belongs to the MobA family. Mg(2+) serves as cofactor.

The protein localises to the cytoplasm. The catalysed reaction is Mo-molybdopterin + GTP + H(+) = Mo-molybdopterin guanine dinucleotide + diphosphate. In terms of biological role, transfers a GMP moiety from GTP to Mo-molybdopterin (Mo-MPT) cofactor (Moco or molybdenum cofactor) to form Mo-molybdopterin guanine dinucleotide (Mo-MGD) cofactor. In Nostoc sp. (strain PCC 7120 / SAG 25.82 / UTEX 2576), this protein is Probable molybdenum cofactor guanylyltransferase.